The primary structure comprises 293 residues: Release factor glutamine methyltransferase (293 aa).

Residues 130–134 (GTGSG), Asp153, Trp182, and Asn199 contribute to the S-adenosyl-L-methionine site. 199–202 (NPPY) serves as a coordination point for substrate.

The protein belongs to the protein N5-glutamine methyltransferase family. PrmC subfamily.

It carries out the reaction L-glutaminyl-[peptide chain release factor] + S-adenosyl-L-methionine = N(5)-methyl-L-glutaminyl-[peptide chain release factor] + S-adenosyl-L-homocysteine + H(+). Functionally, methylates the class 1 translation termination release factors RF1/PrfA and RF2/PrfB on the glutamine residue of the universally conserved GGQ motif. This is Release factor glutamine methyltransferase from Prochlorococcus marinus (strain SARG / CCMP1375 / SS120).